A 228-amino-acid polypeptide reads, in one-letter code: Vesicle transport protein SEC20 (228 aa).

Over 1–199 (MAAPQDVHVR…LITKYNRREL (199 aa)) the chain is Cytoplasmic. A coiled-coil region spans residues 37-90 (LSELTELNTKVKEKFQQLKHRIQELEQSAKEQDKESEKQLLLQEVENHKKQMLS). The chain crosses the membrane as a helical; Anchor for type IV membrane protein span at residues 200-220 (TDKLLIFLALALFLATVLYIV). The Lumenal portion of the chain corresponds to 221–228 (KKRLFPFL).

It belongs to the SEC20 family. As to quaternary structure, component of a SNARE complex consisting of STX18, USE1L, BNIP1/SEC20L and SEC22B. Interacts directly with STX18, RINT1/TIP20L and NAPA. Interacts with ZW10 through RINT1. Interacts with BCL2. Interacts with RNF186. Interacts with RNF185. Interacts with SQSTM1; increased by 'Lys-63'-linked polyubiquitination of BNIP1. In terms of processing, polyubiquitinated. 'Lys-63'-linked polyubiquitination by RNF185 increases the interaction with the autophagy receptor SQSTM1. Undergoes 'Lys-29'- and 'Lys-63'-linked polyubiquitination by RNF186 that may regulate BNIP1 localization to the mitochondrion.

Its subcellular location is the endoplasmic reticulum membrane. It localises to the mitochondrion membrane. In terms of biological role, as part of a SNARE complex may be involved in endoplasmic reticulum membranes fusion and be required for the maintenance of endoplasmic reticulum organization. Also plays a role in apoptosis. It is for instance required for endoplasmic reticulum stress-induced apoptosis. As a substrate of RNF185 interacting with SQSTM1, might also be involved in mitochondrial autophagy. This chain is Vesicle transport protein SEC20, found in Rattus norvegicus (Rat).